The chain runs to 384 residues: Flap endonuclease 1 (384 aa).

Residues 1–105 (MGIKKLTDLI…GELAKRQARR (105 aa)) are N-domain. Asp-34 provides a ligand contact to Mg(2+). Arg-71 is a binding site for DNA. Mg(2+) is bound by residues Asp-87, Glu-159, Glu-161, Asp-180, and Asp-182. The interval 123-254 (EVQKFAKRVI…KRAIELIQKH (132 aa)) is I-domain. Residue Glu-159 coordinates DNA. The DNA site is built by Gly-232 and Asp-234. Asp-234 provides a ligand contact to Mg(2+). Residues 338–346 (VQSRMDSFI) form an interaction with PCNA region. Residues 349–384 (IKKPEDPNDKKKKVTKTPSKPSAKTSKKSSSTFKRK) form a disordered region. Residues 364–384 (KTPSKPSAKTSKKSSSTFKRK) show a composition bias toward low complexity.

Belongs to the XPG/RAD2 endonuclease family. FEN1 subfamily. In terms of assembly, interacts with PCNA. Three molecules of repg bind to one PCNA trimer with each molecule binding to one PCNA monomer. PCNA stimulates the nuclease activity without altering cleavage specificity. The cofactor is Mg(2+). Phosphorylated. Phosphorylation upon DNA damage induces relocalization to the nuclear plasma.

The protein resides in the nucleus. The protein localises to the nucleolus. It is found in the nucleoplasm. It localises to the mitochondrion. Functionally, structure-specific nuclease with 5'-flap endonuclease and 5'-3' exonuclease activities involved in DNA replication and repair. During DNA replication, cleaves the 5'-overhanging flap structure that is generated by displacement synthesis when DNA polymerase encounters the 5'-end of a downstream Okazaki fragment. It enters the flap from the 5'-end and then tracks to cleave the flap base, leaving a nick for ligation. Also involved in the long patch base excision repair (LP-BER) pathway, by cleaving within the apurinic/apyrimidinic (AP) site-terminated flap. Acts as a genome stabilization factor that prevents flaps from equilibrating into structures that lead to duplications and deletions. Also possesses 5'-3' exonuclease activity on nicked or gapped double-stranded DNA, and exhibits RNase H activity. Also involved in replication and repair of rDNA and in repairing mitochondrial DNA. This is Flap endonuclease 1 from Dictyostelium discoideum (Social amoeba).